We begin with the raw amino-acid sequence, 455 residues long: P2X purinoceptor 5 (455 aa).

Topologically, residues 1 to 34 (MGQAAWKGFVLSLFDYKTAKFVVAKSKKVGLLYR) are cytoplasmic. Residues 35–55 (VLQLIILLYLLIWVFLIKKSY) traverse the membrane as a helical segment. Over 56 to 341 (QDIDTSLQSA…SIIPTVINIG (286 aa)) the chain is Extracellular. Residues K69 and K71 each contribute to the ATP site. N77 is a glycosylation site (N-linked (GlcNAc...) asparagine). 3 cysteine pairs are disulfide-bonded: C118/C169, C129/C152, and C135/C163. N157 carries an N-linked (GlcNAc...) asparagine glycan. ATP is bound at residue T189. An N-linked (GlcNAc...) asparagine glycan is attached at N202. Disulfide bonds link C220/C229 and C263/C272. Positions 294, 296, and 314 each coordinate ATP. Residues 342–362 (SGLALMGAGAFFCDLVLIYLI) form a helical membrane-spanning segment. Topologically, residues 363 to 455 (RKSEFYRDKK…QSQILHPVKT (93 aa)) are cytoplasmic. The span at 384–401 (NVEVEANEMEQERPEDEP) shows a compositional bias: acidic residues. The disordered stretch occupies residues 384 to 422 (NVEVEANEMEQERPEDEPLERVRQDEQSQELAQSGRKQN). The span at 412–422 (QELAQSGRKQN) shows a compositional bias: polar residues.

This sequence belongs to the P2X receptor family. As to quaternary structure, functional P2XRs are organized as homomeric and heteromeric trimers. Homotrimer. Forms heterotrimer with P2RX1. Predominantly expressed in heart but are also present in brain, spinal cord and adrenal gland.

It is found in the cell membrane. The enzyme catalyses Na(+)(in) = Na(+)(out). It catalyses the reaction Ca(2+)(in) = Ca(2+)(out). It carries out the reaction chloride(in) = chloride(out). With respect to regulation, activated by ATP. Slowly desensitizing. Not activated by ATP agonist alpha/beta-methylene-ATP. Highly sensitive to the antagonists suramin and PPADS. ATP-gated nonselective transmembrane cation channel. Permeable to potassium, sodium and calcium. Unlike other P2RX receptors, the P2X5 receptor is also permeable to chloride. Acts as an important regulator of inflammatory-related bone loss and osteoclast multinucleation. The polypeptide is P2X purinoceptor 5 (P2rx5) (Rattus norvegicus (Rat)).